The sequence spans 259 residues: uncharacterized protein (259 aa).

In terms of domain architecture, HD spans 51–173; sequence GKTHAKIVAN…IAVADGTDMT (123 aa).

This is an uncharacterized protein from Methanocaldococcus jannaschii (strain ATCC 43067 / DSM 2661 / JAL-1 / JCM 10045 / NBRC 100440) (Methanococcus jannaschii).